The chain runs to 197 residues: Glycerol-3-phosphate acyltransferase (197 aa).

A run of 5 helical transmembrane segments spans residues 1 to 21, 50 to 70, 82 to 102, 112 to 132, and 159 to 179; these read MDFI…GLLI, LGFA…VLAA, IVCL…YLGF, LGVF…VFAA, and GASQ…WIKH.

The protein belongs to the PlsY family. As to quaternary structure, probably interacts with PlsX.

Its subcellular location is the cell inner membrane. The catalysed reaction is an acyl phosphate + sn-glycerol 3-phosphate = a 1-acyl-sn-glycero-3-phosphate + phosphate. It functions in the pathway lipid metabolism; phospholipid metabolism. Its function is as follows. Catalyzes the transfer of an acyl group from acyl-phosphate (acyl-PO(4)) to glycerol-3-phosphate (G3P) to form lysophosphatidic acid (LPA). This enzyme utilizes acyl-phosphate as fatty acyl donor, but not acyl-CoA or acyl-ACP. The polypeptide is Glycerol-3-phosphate acyltransferase (Desulfotalea psychrophila (strain LSv54 / DSM 12343)).